Here is a 91-residue protein sequence, read N- to C-terminus: UPF0250 protein NMC1112 (91 aa).

The protein belongs to the UPF0250 family.

The sequence is that of UPF0250 protein NMC1112 from Neisseria meningitidis serogroup C / serotype 2a (strain ATCC 700532 / DSM 15464 / FAM18).